Here is a 257-residue protein sequence, read N- to C-terminus: Imidazole glycerol phosphate synthase subunit HisF (257 aa).

Residues Asp12 and Asp131 contribute to the active site.

This sequence belongs to the HisA/HisF family. As to quaternary structure, heterodimer of HisH and HisF.

The protein resides in the cytoplasm. The enzyme catalyses 5-[(5-phospho-1-deoxy-D-ribulos-1-ylimino)methylamino]-1-(5-phospho-beta-D-ribosyl)imidazole-4-carboxamide + L-glutamine = D-erythro-1-(imidazol-4-yl)glycerol 3-phosphate + 5-amino-1-(5-phospho-beta-D-ribosyl)imidazole-4-carboxamide + L-glutamate + H(+). It participates in amino-acid biosynthesis; L-histidine biosynthesis; L-histidine from 5-phospho-alpha-D-ribose 1-diphosphate: step 5/9. Its function is as follows. IGPS catalyzes the conversion of PRFAR and glutamine to IGP, AICAR and glutamate. The HisF subunit catalyzes the cyclization activity that produces IGP and AICAR from PRFAR using the ammonia provided by the HisH subunit. This Marinomonas sp. (strain MWYL1) protein is Imidazole glycerol phosphate synthase subunit HisF.